Reading from the N-terminus, the 264-residue chain is Ferric siderophore reductase (264 aa).

The FAD-binding FR-type domain maps to 9–127 (SPTRLTYISD…PGPLKMNRFD (119 aa)). 12 residues coordinate FAD: arginine 73, serine 74, threonine 76, aspartate 90, valine 92, histidine 96, alanine 100, threonine 101, lysine 247, asparagine 249, threonine 250, and alanine 252.

This sequence belongs to the SIP oxidoreductase family. The cofactor is FAD.

Ferric-siderophore reductase involved in iron removal from the siderophores after their transport into the cell. Catalyzes the reduction of the ferric iron bound to the hydroxamate siderophores produced by Shewanella to ferrous iron. Can use a ferredoxin as electron donor. Despite the clear evidence for the interaction with NAD(P)H, no direct reduction of the enzyme by these compounds is observed, nor consumption of NAD(P)H, suggesting that NADH and NADPH are not the physiological electron donors. This chain is Ferric siderophore reductase, found in Shewanella frigidimarina (strain NCIMB 400).